Reading from the N-terminus, the 205-residue chain is MKVVAFERSVQGTGASRRLRNSGKTPGIIYGGAAEPKMIELDHNALWHALKKEAFHSSILELEVAGKSEQALLRAFQMHPFKPLVLHVDFQRVSANDKIHVKVPLHFMNQETAPGVKLGHGIVNHILNDLEVSCLPADLPEFIEVDLAAVELNQTVHLSDIKLPKGVTVITHGDDNPAVASISQPAGAVSEAAEGGEAAGETPAA.

Residues 184 to 205 (QPAGAVSEAAEGGEAAGETPAA) are disordered. Positions 186-205 (AGAVSEAAEGGEAAGETPAA) are enriched in low complexity.

Belongs to the bacterial ribosomal protein bL25 family. CTC subfamily. As to quaternary structure, part of the 50S ribosomal subunit; part of the 5S rRNA/L5/L18/L25 subcomplex. Contacts the 5S rRNA. Binds to the 5S rRNA independently of L5 and L18.

Functionally, this is one of the proteins that binds to the 5S RNA in the ribosome where it forms part of the central protuberance. The chain is Large ribosomal subunit protein bL25 from Cupriavidus necator (strain ATCC 17699 / DSM 428 / KCTC 22496 / NCIMB 10442 / H16 / Stanier 337) (Ralstonia eutropha).